The following is a 422-amino-acid chain: Probable biofilm formation methyltransferase WspC (422 aa).

Residues 1–264 (MNDRFERLLK…LSFVFRRTSE (264 aa)) form the CheR-type methyltransferase domain. Residues T67, R71, E108, D132, 186 to 187 (NL), and 205 to 206 (RN) contribute to the S-adenosyl-L-methionine site. A disordered region spans residues 289 to 316 (ASIRPSPPPPAKPRQRLSSLVPPASGQP). Residues 354-387 (ATVFYWLGLLSDVAGQEQEAQDFYRKALYLEPQH) form a TPR repeat.

Monomer.

In terms of biological role, involved in biofilm formation. The polypeptide is Probable biofilm formation methyltransferase WspC (wspC) (Pseudomonas aeruginosa (strain ATCC 15692 / DSM 22644 / CIP 104116 / JCM 14847 / LMG 12228 / 1C / PRS 101 / PAO1)).